The chain runs to 65 residues: Small ribosomal subunit protein bS21 (65 aa).

The tract at residues G45 to S65 is disordered. Residues K48–Q57 show a composition bias toward basic residues.

Belongs to the bacterial ribosomal protein bS21 family.

The chain is Small ribosomal subunit protein bS21 from Pelodictyon phaeoclathratiforme (strain DSM 5477 / BU-1).